The sequence spans 307 residues: Porphobilinogen deaminase (307 aa).

S-(dipyrrolylmethanemethyl)cysteine is present on C241.

It belongs to the HMBS family. As to quaternary structure, monomer. Requires dipyrromethane as cofactor.

The catalysed reaction is 4 porphobilinogen + H2O = hydroxymethylbilane + 4 NH4(+). It participates in porphyrin-containing compound metabolism; protoporphyrin-IX biosynthesis; coproporphyrinogen-III from 5-aminolevulinate: step 2/4. In terms of biological role, tetrapolymerization of the monopyrrole PBG into the hydroxymethylbilane pre-uroporphyrinogen in several discrete steps. This Coxiella burnetii (strain RSA 331 / Henzerling II) protein is Porphobilinogen deaminase.